The sequence spans 143 residues: MAIERTFSIIKPDAVAKNHIGAIYNRFETAGLKIVASKMLHLTKEQAEGFYAEHSERGFFGALVAFMTSGPIMVQVLEGENAVLAHREILGATNPAQAAPGTIRADFAESIDENAAHGSDAVESAAREIAYFFSAEELCPRTR.

Residues lysine 11, phenylalanine 59, arginine 87, threonine 93, arginine 104, and asparagine 114 each contribute to the ATP site. Catalysis depends on histidine 117, which acts as the Pros-phosphohistidine intermediate.

The protein belongs to the NDK family. As to quaternary structure, homotetramer. It depends on Mg(2+) as a cofactor.

The protein resides in the cytoplasm. The catalysed reaction is a 2'-deoxyribonucleoside 5'-diphosphate + ATP = a 2'-deoxyribonucleoside 5'-triphosphate + ADP. It carries out the reaction a ribonucleoside 5'-diphosphate + ATP = a ribonucleoside 5'-triphosphate + ADP. Functionally, major role in the synthesis of nucleoside triphosphates other than ATP. The ATP gamma phosphate is transferred to the NDP beta phosphate via a ping-pong mechanism, using a phosphorylated active-site intermediate. The sequence is that of Nucleoside diphosphate kinase from Shewanella baltica (strain OS223).